The sequence spans 412 residues: Class E basic helix-loop-helix protein 40 (412 aa).

The tract at residues 1–139 (MERIPSAQPP…LSGRNVETGQ (139 aa)) is essential for interaction with BMAL1, E-box binding and repressor activity against the CLOCK-BMAL1 heterodimer. One can recognise a bHLH domain in the interval 52-107 (TYKLPHRLIEKKRRDRINECIAQLKDLLPEHLKLTTLGHLEKAVVLELTLKHVKAL). The tract at residues 75–79 (LKDLL) is necessary for interaction with RXRA and repressor activity against RXRA. The Orange domain occupies 142-175 (FCSGFQTCAREVLQYLAKHENTRDLKSSQLVTHL). Residue Lys-159 forms a Glycyl lysine isopeptide (Lys-Gly) (interchain with G-Cter in SUMO1, SUMO2 and SUMO3) linkage. A Glycyl lysine isopeptide (Lys-Gly) (interchain with G-Cter in SUMO2) cross-link involves residue Lys-167. 2 disordered regions span residues 183–259 (LQGG…SEQL) and 275–309 (IGAI…LISS). Ser-235 carries the phosphoserine modification. Basic and acidic residues predominate over residues 248–259 (ESEKGDLRSEQL). Lys-279 participates in a covalent cross-link: Glycyl lysine isopeptide (Lys-Gly) (interchain with G-Cter in SUMO1); alternate. A Glycyl lysine isopeptide (Lys-Gly) (interchain with G-Cter in SUMO1, SUMO2 and SUMO3); alternate cross-link involves residue Lys-279. Lys-279 is covalently cross-linked (Glycyl lysine isopeptide (Lys-Gly) (interchain with G-Cter in SUMO2); alternate). Lys-288 participates in a covalent cross-link: Glycyl lysine isopeptide (Lys-Gly) (interchain with G-Cter in SUMO2). At Ser-383 the chain carries Phosphoserine.

Homodimer. Heterodimer with BHLHE41/DEC2. Interacts with TCF3/E47. Interacts with ubiquitin-conjugating enzyme UBE2I/UBC9. Interacts with HDAC1, SUMO1, RXRA and BMAL1. Ubiquitinated; which may lead to proteasomal degradation. Post-translationally, sumoylation inhibits its ubiquitination and promotes its negative regulation of the CLOCK-BMAL1 heterodimer transcriptional activator activity.

It localises to the cytoplasm. Its subcellular location is the nucleus. Functionally, transcriptional repressor involved in the regulation of the circadian rhythm by negatively regulating the activity of the clock genes and clock-controlled genes. Acts as the negative limb of a novel autoregulatory feedback loop (DEC loop) which differs from the one formed by the PER and CRY transcriptional repressors (PER/CRY loop). Both these loops are interlocked as it represses the expression of PER1/2 and in turn is repressed by PER1/2 and CRY1/2. Represses the activity of the circadian transcriptional activator: CLOCK-BMAL1|BMAL2 heterodimer by competing for the binding to E-box elements (5'-CACGTG-3') found within the promoters of its target genes. Negatively regulates its own expression and the expression of DBP and BHLHE41/DEC2. Acts as a corepressor of RXR and the RXR-LXR heterodimers and represses the ligand-induced RXRA and NR1H3/LXRA transactivation activity. May be involved in the regulation of chondrocyte differentiation via the cAMP pathway. Represses the transcription of NR0B2 and attentuates the transactivation of NR0B2 by the CLOCK-BMAL1 complex. Drives the circadian rhythm of blood pressure through transcriptional repression of ATP1B1 in the cardiovascular system. This Pongo abelii (Sumatran orangutan) protein is Class E basic helix-loop-helix protein 40 (BHLHE40).